We begin with the raw amino-acid sequence, 583 residues long: Aspartate--tRNA(Asp/Asn) ligase (583 aa).

An L-aspartate-binding site is contributed by Glu-172. Residues 196 to 199 (QMLK) form an aspartate region. An L-aspartate-binding site is contributed by Arg-218. Residues 218–220 (RDE) and Gln-227 each bind ATP. His-446 provides a ligand contact to L-aspartate. Position 480 (Glu-480) interacts with ATP. Residue Arg-487 coordinates L-aspartate. ATP is bound at residue 532–535 (GLDR).

It belongs to the class-II aminoacyl-tRNA synthetase family. Type 1 subfamily. In terms of assembly, homodimer.

It is found in the cytoplasm. It catalyses the reaction tRNA(Asx) + L-aspartate + ATP = L-aspartyl-tRNA(Asx) + AMP + diphosphate. Functionally, aspartyl-tRNA synthetase with relaxed tRNA specificity since it is able to aspartylate not only its cognate tRNA(Asp) but also tRNA(Asn). Reaction proceeds in two steps: L-aspartate is first activated by ATP to form Asp-AMP and then transferred to the acceptor end of tRNA(Asp/Asn). In Streptococcus mutans serotype c (strain ATCC 700610 / UA159), this protein is Aspartate--tRNA(Asp/Asn) ligase.